The following is a 202-amino-acid chain: Probable GTP-binding protein EngB (202 aa).

Residues 26 to 200 form the EngB-type G domain; that stretch reads VSKEIAFTGS…KAQLDSWFSI (175 aa). Residues 34-41, 61-65, 79-82, 146-149, and 179-181 contribute to the GTP site; these read GSSNVGKS, GSTKT, DLPG, NKAD, and FSS. The Mg(2+) site is built by serine 41 and threonine 63.

This sequence belongs to the TRAFAC class TrmE-Era-EngA-EngB-Septin-like GTPase superfamily. EngB GTPase family. Mg(2+) serves as cofactor.

In terms of biological role, necessary for normal cell division and for the maintenance of normal septation. This is Probable GTP-binding protein EngB from Baumannia cicadellinicola subsp. Homalodisca coagulata.